Here is a 98-residue protein sequence, read N- to C-terminus: Large ribosomal subunit protein uL23 (98 aa).

Belongs to the universal ribosomal protein uL23 family. Part of the 50S ribosomal subunit. Contacts protein L29, and trigger factor when it is bound to the ribosome.

One of the early assembly proteins it binds 23S rRNA. One of the proteins that surrounds the polypeptide exit tunnel on the outside of the ribosome. Forms the main docking site for trigger factor binding to the ribosome. This Streptococcus equi subsp. equi (strain 4047) protein is Large ribosomal subunit protein uL23.